The sequence spans 122 residues: Large ribosomal subunit protein uL14 (122 aa).

The protein belongs to the universal ribosomal protein uL14 family. Part of the 50S ribosomal subunit. Forms a cluster with proteins L3 and L19. In the 70S ribosome, L14 and L19 interact and together make contacts with the 16S rRNA in bridges B5 and B8.

In terms of biological role, binds to 23S rRNA. Forms part of two intersubunit bridges in the 70S ribosome. The polypeptide is Large ribosomal subunit protein uL14 (Bacillus subtilis (strain 168)).